A 175-amino-acid chain; its full sequence is ATP synthase subunit delta (175 aa).

It belongs to the ATPase delta chain family. In terms of assembly, F-type ATPases have 2 components, F(1) - the catalytic core - and F(0) - the membrane proton channel. F(1) has five subunits: alpha(3), beta(3), gamma(1), delta(1), epsilon(1). F(0) has three main subunits: a(1), b(2) and c(10-14). The alpha and beta chains form an alternating ring which encloses part of the gamma chain. F(1) is attached to F(0) by a central stalk formed by the gamma and epsilon chains, while a peripheral stalk is formed by the delta and b chains.

Its subcellular location is the cell membrane. Its function is as follows. F(1)F(0) ATP synthase produces ATP from ADP in the presence of a proton or sodium gradient. F-type ATPases consist of two structural domains, F(1) containing the extramembraneous catalytic core and F(0) containing the membrane proton channel, linked together by a central stalk and a peripheral stalk. During catalysis, ATP synthesis in the catalytic domain of F(1) is coupled via a rotary mechanism of the central stalk subunits to proton translocation. This protein is part of the stalk that links CF(0) to CF(1). It either transmits conformational changes from CF(0) to CF(1) or is implicated in proton conduction. This Elusimicrobium minutum (strain Pei191) protein is ATP synthase subunit delta.